We begin with the raw amino-acid sequence, 443 residues long: UDP-N-acetylmuramate--L-alanine ligase (443 aa).

110–116 is an ATP binding site; it reads GAHGKTS.

The protein belongs to the MurCDEF family.

It localises to the cytoplasm. The enzyme catalyses UDP-N-acetyl-alpha-D-muramate + L-alanine + ATP = UDP-N-acetyl-alpha-D-muramoyl-L-alanine + ADP + phosphate + H(+). It participates in cell wall biogenesis; peptidoglycan biosynthesis. In terms of biological role, cell wall formation. The sequence is that of UDP-N-acetylmuramate--L-alanine ligase from Lactococcus lactis subsp. lactis (strain IL1403) (Streptococcus lactis).